The sequence spans 96 residues: UPF0125 protein YfjF (96 aa).

The protein belongs to the UPF0125 (RnfH) family.

The polypeptide is UPF0125 protein YfjF (yfjF) (Escherichia coli O157:H7).